Consider the following 314-residue polypeptide: Oxidoreductase NAD-binding domain-containing protein 1 (314 aa).

A signal peptide spans 1-18 (MALVAGSAAYQVLRGVTG). One can recognise an FAD-binding FR-type domain in the interval 63–166 (EIISPAKVCG…VGGEFCFDPQ (104 aa)). 180–185 (GVGINP) provides a ligand contact to NAD(+).

This is Oxidoreductase NAD-binding domain-containing protein 1 (oxnad1) from Xenopus laevis (African clawed frog).